We begin with the raw amino-acid sequence, 628 residues long: Phosphomethylpyrimidine synthase (628 aa).

Substrate-binding positions include N228, M257, Y286, H322, 342 to 344 (SRG), 383 to 386 (DGLR), and E422. H426 contacts Zn(2+). Y449 is a substrate binding site. H490 is a Zn(2+) binding site. Residues C570, C573, and C578 each contribute to the [4Fe-4S] cluster site.

Belongs to the ThiC family. As to quaternary structure, homodimer. The cofactor is [4Fe-4S] cluster.

It carries out the reaction 5-amino-1-(5-phospho-beta-D-ribosyl)imidazole + S-adenosyl-L-methionine = 4-amino-2-methyl-5-(phosphooxymethyl)pyrimidine + CO + 5'-deoxyadenosine + formate + L-methionine + 3 H(+). It functions in the pathway cofactor biosynthesis; thiamine diphosphate biosynthesis. Functionally, catalyzes the synthesis of the hydroxymethylpyrimidine phosphate (HMP-P) moiety of thiamine from aminoimidazole ribotide (AIR) in a radical S-adenosyl-L-methionine (SAM)-dependent reaction. In Methylibium petroleiphilum (strain ATCC BAA-1232 / LMG 22953 / PM1), this protein is Phosphomethylpyrimidine synthase.